The chain runs to 440 residues: D-serine dehydratase (440 aa).

Lys-116 carries the N6-(pyridoxal phosphate)lysine modification.

Belongs to the serine/threonine dehydratase family. DsdA subfamily. As to quaternary structure, monomer. Pyridoxal 5'-phosphate is required as a cofactor.

The catalysed reaction is D-serine = pyruvate + NH4(+). The polypeptide is D-serine dehydratase (Salmonella choleraesuis (strain SC-B67)).